Consider the following 373-residue polypeptide: 3 beta-hydroxysteroid dehydrogenase/Delta 5--&gt;4-isomerase type 1 (373 aa).

Residues 10-15 (GAGGFL), Tyr-155, and Lys-159 each bind NADP(+). Lys-159 functions as the Proton donor in the catalytic mechanism. Residues 288–308 (VALLYWLGFLLELVSFLLRPV) traverse the membrane as a helical segment.

It belongs to the 3-beta-HSD family. As to expression, high levels in adrenal gland, kidney and male liver. Low levels in female liver.

It is found in the endoplasmic reticulum membrane. It localises to the mitochondrion membrane. The catalysed reaction is a 3beta-hydroxy-Delta(5)-steroid + NAD(+) = a 3-oxo-Delta(5)-steroid + NADH + H(+). It catalyses the reaction pregnenolone + NAD(+) = pregn-5-ene-3,20-dione + NADH + H(+). It carries out the reaction 3beta-hydroxyandrost-5-en-17-one + NAD(+) = androst-5-ene-3,17-dione + NADH + H(+). The enzyme catalyses androst-5-en-3beta,17beta-diol + NAD(+) = 17beta-hydroxy-androst-5-en-3-one + NADH + H(+). The catalysed reaction is a 3beta-hydroxysteroid + NADP(+) = a 3-oxosteroid + NADPH + H(+). It catalyses the reaction 5alpha-androstane-3beta,17beta-diol + NADP(+) = 17beta-hydroxy-5alpha-androstan-3-one + NADPH + H(+). It carries out the reaction 3beta-hydroxy-5alpha-androstan-17-one + NADP(+) = 5alpha-androstan-3,17-dione + NADPH + H(+). The enzyme catalyses a 3-oxo-Delta(5)-steroid = a 3-oxo-Delta(4)-steroid. The catalysed reaction is pregn-5-ene-3,20-dione = progesterone. It catalyses the reaction androst-5-ene-3,17-dione = androst-4-ene-3,17-dione. It carries out the reaction 17beta-hydroxy-androst-5-en-3-one = testosterone. The enzyme catalyses 5alpha-androstane-3beta,17beta-diol + NAD(+) = 17beta-hydroxy-5alpha-androstan-3-one + NADH + H(+). Its pathway is steroid hormone biosynthesis. It functions in the pathway steroid metabolism. Functionally, a bifunctional enzyme responsible for the oxidation and isomerization of 3beta-hydroxy-Delta(5)-steroid precursors to 3-oxo-Delta(4)-steroids, an essential step in steroid hormone biosynthesis. Specifically catalyzes the conversion of pregnenolone to progesterone, 17alpha-hydroxypregnenolone to 17alpha-hydroxyprogesterone, dehydroepiandrosterone (DHEA) to 4-androstenedione, and androstenediol to testosterone. Additionally, catalyzes the interconversion between 3beta-hydroxy and 3-oxo-5alpha-androstane steroids controlling the bioavalability of the active forms. Specifically converts dihydrotestosterone to its inactive form 5alpha-androstanediol, that does not bind androgen receptor/AR. Also converts androstanedione, a precursor of testosterone and estrone, to epiandrosterone. Expected to use NAD(+) as preferred electron donor for the 3-beta-hydroxy-steroid dehydrogenase activity and NADPH for the 3-ketosteroid reductase activity. This Mesocricetus auratus (Golden hamster) protein is 3 beta-hydroxysteroid dehydrogenase/Delta 5--&gt;4-isomerase type 1 (HSD3B1).